Consider the following 236-residue polypeptide: Glucosamine-6-phosphate deaminase (236 aa).

The Proton acceptor; for enolization step role is filled by Asp-62. Catalysis depends on Asn-128, which acts as the For ring-opening step. His-130 functions as the Proton acceptor; for ring-opening step in the catalytic mechanism. Catalysis depends on Glu-135, which acts as the For ring-opening step.

It belongs to the glucosamine/galactosamine-6-phosphate isomerase family. NagB subfamily.

It carries out the reaction alpha-D-glucosamine 6-phosphate + H2O = beta-D-fructose 6-phosphate + NH4(+). The protein operates within amino-sugar metabolism; N-acetylneuraminate degradation; D-fructose 6-phosphate from N-acetylneuraminate: step 5/5. In terms of biological role, catalyzes the reversible isomerization-deamination of glucosamine 6-phosphate (GlcN6P) to form fructose 6-phosphate (Fru6P) and ammonium ion. This is Glucosamine-6-phosphate deaminase from Lacticaseibacillus paracasei (strain ATCC 334 / BCRC 17002 / CCUG 31169 / CIP 107868 / KCTC 3260 / NRRL B-441) (Lactobacillus paracasei).